A 1079-amino-acid chain; its full sequence is Translation initiation factor IF-2 (1079 aa).

Composition is skewed to basic and acidic residues over residues 52–65 (VQAQ…KEGN), 75–90 (RDGD…KAPE), and 102–134 (APER…KEPQ). The segment at 52 to 488 (VQAQRDGGAR…RGKKDVRPAA (437 aa)) is disordered. A compositionally biased stretch (low complexity) spans 150-184 (APVAKVVEAAPAETPAPEAPAVKATVTAEAAPAKT). Residues 185–194 (VEPESERPQA) are compositionally biased toward basic and acidic residues. Low complexity predominate over residues 276 to 291 (AAVAQQQMQQQAAQQQ). Basic and acidic residues predominate over residues 306–327 (GGYRPEGQREGGYRPEGQREGG). 2 stretches are compositionally biased toward low complexity: residues 348–370 (EGGY…GPRP) and 380–398 (PGAP…APRP). The span at 419 to 429 (PRPGGFGGAPG) shows a compositional bias: gly residues. Basic and acidic residues predominate over residues 461 to 471 (PRGRSDDDVMR). Basic residues predominate over residues 473–482 (PRGRGKRGKK). One can recognise a tr-type G domain in the interval 578 to 745 (TRPPVVTIMG…LIAIQAEILE (168 aa)). Positions 587-594 (GHVDHGKT) are G1. Position 587–594 (587–594 (GHVDHGKT)) interacts with GTP. The tract at residues 612 to 616 (GITQH) is G2. Positions 633–636 (DTPG) are G3. GTP is bound by residues 633–637 (DTPGH) and 687–690 (NKMD). Residues 687–690 (NKMD) form a G4 region. A G5 region spans residues 723–725 (SAK).

This sequence belongs to the TRAFAC class translation factor GTPase superfamily. Classic translation factor GTPase family. IF-2 subfamily.

It is found in the cytoplasm. Functionally, one of the essential components for the initiation of protein synthesis. Protects formylmethionyl-tRNA from spontaneous hydrolysis and promotes its binding to the 30S ribosomal subunits. Also involved in the hydrolysis of GTP during the formation of the 70S ribosomal complex. The sequence is that of Translation initiation factor IF-2 from Nitratidesulfovibrio vulgaris (strain ATCC 29579 / DSM 644 / CCUG 34227 / NCIMB 8303 / VKM B-1760 / Hildenborough) (Desulfovibrio vulgaris).